A 214-amino-acid polypeptide reads, in one-letter code: Probable adenylyl-sulfate kinase (214 aa).

13–20 (GLSGAGKT) provides a ligand contact to ATP. The active-site Phosphoserine intermediate is Ser87. The tract at residues 174–199 (WNRTNTFPLKSRPNPPHRHKSKSSRA) is disordered.

The protein belongs to the APS kinase family.

It catalyses the reaction adenosine 5'-phosphosulfate + ATP = 3'-phosphoadenylyl sulfate + ADP + H(+). It functions in the pathway sulfur metabolism; hydrogen sulfide biosynthesis; sulfite from sulfate: step 2/3. Catalyzes the synthesis of activated sulfate. The sequence is that of Probable adenylyl-sulfate kinase from Pseudomonas aeruginosa.